Here is a 149-residue protein sequence, read N- to C-terminus: Large ribosomal subunit protein bL9 (149 aa).

The protein belongs to the bacterial ribosomal protein bL9 family.

Binds to the 23S rRNA. The polypeptide is Large ribosomal subunit protein bL9 (Xylella fastidiosa (strain M23)).